Here is a 123-residue protein sequence, read N- to C-terminus: Cytochrome c-555 (123 aa).

Residues Met-1–Ser-27 form the signal peptide. Cys-46, Cys-49, His-50, and Met-86 together coordinate heme c.

In terms of processing, binds 1 heme c group covalently per subunit.

The chain is Cytochrome c-555 from Methylococcus capsulatus (strain ATCC 33009 / NCIMB 11132 / Bath).